The primary structure comprises 442 residues: 3-phosphoshikimate 1-carboxyvinyltransferase (442 aa).

Residues 1–11 are compositionally biased toward polar residues; it reads MQVSRPLTVSA. The disordered stretch occupies residues 1-25; that stretch reads MQVSRPLTVSASPKGLSGRTRVPGD. Residues K26, S27, and R31 each coordinate 3-phosphoshikimate. K26 contributes to the phosphoenolpyruvate binding site. Residues G98 and R126 each contribute to the phosphoenolpyruvate site. 4 residues coordinate 3-phosphoshikimate: S171, Q173, D324, and K351. Q173 is a phosphoenolpyruvate binding site. D324 acts as the Proton acceptor in catalysis. Residues R355 and R398 each contribute to the phosphoenolpyruvate site.

It belongs to the EPSP synthase family. In terms of assembly, monomer.

Its subcellular location is the cytoplasm. It catalyses the reaction 3-phosphoshikimate + phosphoenolpyruvate = 5-O-(1-carboxyvinyl)-3-phosphoshikimate + phosphate. The protein operates within metabolic intermediate biosynthesis; chorismate biosynthesis; chorismate from D-erythrose 4-phosphate and phosphoenolpyruvate: step 6/7. Functionally, catalyzes the transfer of the enolpyruvyl moiety of phosphoenolpyruvate (PEP) to the 5-hydroxyl of shikimate-3-phosphate (S3P) to produce enolpyruvyl shikimate-3-phosphate and inorganic phosphate. This chain is 3-phosphoshikimate 1-carboxyvinyltransferase, found in Gluconobacter oxydans (strain 621H) (Gluconobacter suboxydans).